The primary structure comprises 646 residues: Type III restriction-modification enzyme EcoPI Mod subunit (646 aa).

The interval aspartate 123–tyrosine 126 is binding of S-adenosyl methionine.

This sequence belongs to the N(4)/N(6)-methyltransferase family. As to quaternary structure, homodimer. A heterotetramer with stoichiometry Res(2)Mod(2).

The enzyme catalyses a 2'-deoxyadenosine in DNA + S-adenosyl-L-methionine = an N(6)-methyl-2'-deoxyadenosine in DNA + S-adenosyl-L-homocysteine + H(+). Functionally, a beta subtype methylase that binds the system-specific DNA recognition site 5'-AGACC-3' and methylates A-3 (of only 1 strand as the other does not have an A residue). DNA restriction requires both the Res and Mod subunits. The sequence is that of Type III restriction-modification enzyme EcoPI Mod subunit from Enterobacteriaceae (Bacteriophage P1).